The primary structure comprises 544 residues: Chaperonin GroEL 1 (544 aa).

ATP-binding positions include 29–32 (TLGP), 86–90 (DGTTT), Gly-413, 479–481 (NAA), and Asp-495.

Belongs to the chaperonin (HSP60) family. As to quaternary structure, forms a cylinder of 14 subunits composed of two heptameric rings stacked back-to-back. Interacts with the co-chaperonin GroES.

Its subcellular location is the cytoplasm. The enzyme catalyses ATP + H2O + a folded polypeptide = ADP + phosphate + an unfolded polypeptide.. Functionally, together with its co-chaperonin GroES, plays an essential role in assisting protein folding. The GroEL-GroES system forms a nano-cage that allows encapsulation of the non-native substrate proteins and provides a physical environment optimized to promote and accelerate protein folding. The polypeptide is Chaperonin GroEL 1 (Trichormus variabilis (strain ATCC 29413 / PCC 7937) (Anabaena variabilis)).